A 156-amino-acid chain; its full sequence is Aspartate carbamoyltransferase regulatory chain (156 aa).

Residues C109, C114, C140, and C143 each coordinate Zn(2+).

The protein belongs to the PyrI family. Contains catalytic and regulatory chains. The cofactor is Zn(2+).

In terms of biological role, involved in allosteric regulation of aspartate carbamoyltransferase. This is Aspartate carbamoyltransferase regulatory chain from Methanosarcina barkeri (strain Fusaro / DSM 804).